Here is a 429-residue protein sequence, read N- to C-terminus: Enolase (429 aa).

Position 169 (glutamine 169) interacts with (2R)-2-phosphoglycerate. The active-site Proton donor is the glutamate 211. Residues aspartate 248, glutamate 289, and aspartate 316 each contribute to the Mg(2+) site. (2R)-2-phosphoglycerate contacts are provided by lysine 341, arginine 370, serine 371, and lysine 392. Lysine 341 acts as the Proton acceptor in catalysis.

Belongs to the enolase family. It depends on Mg(2+) as a cofactor.

It is found in the cytoplasm. The protein resides in the secreted. The protein localises to the cell surface. It catalyses the reaction (2R)-2-phosphoglycerate = phosphoenolpyruvate + H2O. It participates in carbohydrate degradation; glycolysis; pyruvate from D-glyceraldehyde 3-phosphate: step 4/5. Functionally, catalyzes the reversible conversion of 2-phosphoglycerate (2-PG) into phosphoenolpyruvate (PEP). It is essential for the degradation of carbohydrates via glycolysis. This chain is Enolase, found in Anaplasma phagocytophilum (strain HZ).